The following is a 153-amino-acid chain: Ribosomal RNA large subunit methyltransferase H (153 aa).

S-adenosyl-L-methionine is bound by residues L70, G102, and 121–126 (LSRMTF).

Belongs to the RNA methyltransferase RlmH family. As to quaternary structure, homodimer.

It is found in the cytoplasm. The enzyme catalyses pseudouridine(1915) in 23S rRNA + S-adenosyl-L-methionine = N(3)-methylpseudouridine(1915) in 23S rRNA + S-adenosyl-L-homocysteine + H(+). In terms of biological role, specifically methylates the pseudouridine at position 1915 (m3Psi1915) in 23S rRNA. This Geotalea uraniireducens (strain Rf4) (Geobacter uraniireducens) protein is Ribosomal RNA large subunit methyltransferase H.